A 474-amino-acid chain; its full sequence is Protein IFIT1 homolog B (474 aa).

TPR repeat units lie at residues 52-85 (VGIHNLLAYVKHLKGQNEEALVSLKKAEDLIQKE), 95-128 (LVTWGNFAWVYYHMGRLAEAQTYLDKVENTCKKF), 141-174 (VDCEEGWALAKCGGKNYERAKTCFEKALEGNPEN), 182-216 (AITVYRLDKFNTASGRNKAFSLHVLKRAVRLNPDD), 218-250 (YIRVLLALKLQDEGQEAEGEKYIEEALTSISSQ), 251-284 (AYVFQYAAKFYRRKGSVDKALELLKMALETTPTS), 305-339 (ATNWQPRGQDRETVDRLVQLAICKFEKTIMLKRTF), 340-373 (EMAYVDLAETYAEIGHHRKAEEHFQKGLRMKIFE), 378-412 (QEIHYHYGRFQEHHGKSQDKAITHYLKGLKIEKMS), and 437-470 (VESVSLLGLIHKLKGEVSDALLCYERALRLAADL).

This sequence belongs to the IFIT family.

Functionally, IFIT1B is likely non-functional, lacking the critical antiviral role of IFIT1. Unlike IFIT1, which is essential in the innate immune response as part of an interferon-dependent multiprotein complex, IFIT1B does not prevent the translation of viral RNAs that lack host-specific 2'-O-methylation at their 5' cap. Consequently, it probably cannot inhibit their translation by competing with the host translation machinery. The chain is Protein IFIT1 homolog B from Homo sapiens (Human).